We begin with the raw amino-acid sequence, 508 residues long: ADP-ribosylarginine hydrolase CG3568 (508 aa).

ADP-D-ribose is bound by residues Arg209, Gly349, Gly351, Gly353, Val354, Trp355, Trp390, Asp441, Asn448, Glu449, Gly459, and Asp460.

The enzyme catalyses N(omega)-(ADP-D-ribosyl)-L-arginyl-[protein] + H2O = ADP-D-ribose + L-arginyl-[protein]. The catalysed reaction is N(omega)-(ADP-D-ribosyl)-L-arginine + H2O = ADP-D-ribose + L-arginine. Functionally, protein ADP-ribosyl hydrolase that specifically removes mono-ADP-ribosyl modifications from protein arginine residues. The polypeptide is ADP-ribosylarginine hydrolase CG3568 (Drosophila melanogaster (Fruit fly)).